Here is a 201-residue protein sequence, read N- to C-terminus: Small ribosomal subunit protein uS4 (201 aa).

Residues 1-42 (MARYTGPVTRKSRRLGTDLVGGDQSFEKRPYPPGQHGRARIK) form a disordered region. Residues 91–157 (SRLDNVVYRA…VPFQIARETA (67 aa)) enclose the S4 RNA-binding domain.

Belongs to the universal ribosomal protein uS4 family. As to quaternary structure, part of the 30S ribosomal subunit. Contacts protein S5. The interaction surface between S4 and S5 is involved in control of translational fidelity.

In terms of biological role, one of the primary rRNA binding proteins, it binds directly to 16S rRNA where it nucleates assembly of the body of the 30S subunit. With S5 and S12 plays an important role in translational accuracy. In Mycobacterium ulcerans (strain Agy99), this protein is Small ribosomal subunit protein uS4.